We begin with the raw amino-acid sequence, 655 residues long: Macrolide export ATP-binding/permease protein MacB (655 aa).

An ABC transporter domain is found at 6 to 244 (IVLRGLRREY…VAAPTAAAAQ (239 aa)). 42 to 49 (GASGSGKS) contributes to the ATP binding site. The next 4 helical transmembrane spans lie at 279 to 299 (FLTMLGIIIGIASVVFIVAVG), 528 to 548 (LTLMIAAIAVISLVVGGIGVM), 579 to 599 (FLIEAVMVCLIGGGLGVAVAY), and 618 to 638 (AGSIIAAFICSTGIGVVFGYL).

This sequence belongs to the ABC transporter superfamily. Macrolide exporter (TC 3.A.1.122) family. Homodimer.

It is found in the cell inner membrane. Non-canonical ABC transporter that contains transmembrane domains (TMD), which form a pore in the inner membrane, and an ATP-binding domain (NBD), which is responsible for energy generation. Confers resistance against macrolides. This chain is Macrolide export ATP-binding/permease protein MacB, found in Rhodopseudomonas palustris (strain BisB18).